Consider the following 337-residue polypeptide: UDP-3-O-acylglucosamine N-acyltransferase (337 aa).

Residue H238 is the Proton acceptor of the active site.

This sequence belongs to the transferase hexapeptide repeat family. LpxD subfamily. As to quaternary structure, homotrimer.

The catalysed reaction is a UDP-3-O-[(3R)-3-hydroxyacyl]-alpha-D-glucosamine + a (3R)-hydroxyacyl-[ACP] = a UDP-2-N,3-O-bis[(3R)-3-hydroxyacyl]-alpha-D-glucosamine + holo-[ACP] + H(+). The protein operates within bacterial outer membrane biogenesis; LPS lipid A biosynthesis. Functionally, catalyzes the N-acylation of UDP-3-O-acylglucosamine using 3-hydroxyacyl-ACP as the acyl donor. Is involved in the biosynthesis of lipid A, a phosphorylated glycolipid that anchors the lipopolysaccharide to the outer membrane of the cell. This Xanthomonas euvesicatoria pv. vesicatoria (strain 85-10) (Xanthomonas campestris pv. vesicatoria) protein is UDP-3-O-acylglucosamine N-acyltransferase.